A 136-amino-acid polypeptide reads, in one-letter code: Frataxin, mitochondrial (136 aa).

This sequence belongs to the frataxin family. As to quaternary structure, monomer. Oligomer.

It is found in the mitochondrion. The catalysed reaction is 4 Fe(2+) + O2 + 4 H(+) = 4 Fe(3+) + 2 H2O. Promotes the biosynthesis of heme as well as the assembly and repair of iron-sulfur clusters by delivering Fe(2+) to proteins involved in these pathways. May play a role in the protection against iron-catalyzed oxidative stress through its ability to catalyze the oxidation of Fe(2+) to Fe(3+). May be able to store large amounts of the metal in the form of a ferrihydrite mineral by oligomerization. This chain is Frataxin, mitochondrial (frh-1), found in Caenorhabditis elegans.